Consider the following 291-residue polypeptide: MDARAINSREKADLKYPRNTYIIGDVQGCYRELQELLELIQFDSTKDRLGFVGDLVNRGPNSLEVLRFLKSLSSPLIVLGNHDLYLLILGYGLMPEDSYEHTLHAVLQAPDKLELLEWLRHCPLIRYEKSLSAVLVHAGLPPQWNIKESILHAEEISTALKGPHYLAFLKNLFGNEPSQWKDDLEGQDRLRYICNAFTRMRFCDAKGHLDLESEGKTNQAPSRFRPWFEWRNPQEDNVDIVFGHWAALNGQSSAPHTHALDTGCAWGYKLTAINLKTKERFSVPCQSALRM.

This sequence belongs to the Ap4A hydrolase family.

The enzyme catalyses P(1),P(4)-bis(5'-adenosyl) tetraphosphate + H2O = 2 ADP + 2 H(+). Its function is as follows. Hydrolyzes diadenosine 5',5'''-P1,P4-tetraphosphate to yield ADP. The chain is Bis(5'-nucleosyl)-tetraphosphatase, symmetrical from Coxiella burnetii (strain Dugway 5J108-111).